Here is a 137-residue protein sequence, read N- to C-terminus: Large-conductance mechanosensitive channel (137 aa).

The next 2 membrane-spanning stretches (helical) occupy residues 9–29 (AFAVKGNVVDMAVGIIIGAAF) and 79–99 (IQTILDFVIVAFAIFMGVKAI).

The protein belongs to the MscL family. In terms of assembly, homopentamer.

It is found in the cell inner membrane. Functionally, channel that opens in response to stretch forces in the membrane lipid bilayer. May participate in the regulation of osmotic pressure changes within the cell. This Pseudomonas aeruginosa (strain UCBPP-PA14) protein is Large-conductance mechanosensitive channel.